We begin with the raw amino-acid sequence, 190 residues long: 3-isopropylmalate dehydratase small subunit (190 aa).

Belongs to the LeuD family. LeuD type 1 subfamily. Heterodimer of LeuC and LeuD.

It catalyses the reaction (2R,3S)-3-isopropylmalate = (2S)-2-isopropylmalate. It functions in the pathway amino-acid biosynthesis; L-leucine biosynthesis; L-leucine from 3-methyl-2-oxobutanoate: step 2/4. Catalyzes the isomerization between 2-isopropylmalate and 3-isopropylmalate, via the formation of 2-isopropylmaleate. The protein is 3-isopropylmalate dehydratase small subunit of Staphylococcus aureus (strain MRSA252).